The chain runs to 215 residues: UPF0502 protein PputGB1_3531 (215 aa).

Belongs to the UPF0502 family.

This Pseudomonas putida (strain GB-1) protein is UPF0502 protein PputGB1_3531.